A 1133-amino-acid polypeptide reads, in one-letter code: RNA-dependent RNA polymerase 2 (1133 aa).

Positions 830, 832, and 834 each coordinate Mg(2+).

Belongs to the RdRP family. In terms of assembly, interacts with NRPD1 and SHH1. Associates with Pol IV complex, forming an interpolymerase channel bridging their active sites, through which the Pol IV-generated transcript is handed over to the RDR2 active site after being backtracked, where it is used as the template for double-stranded RNA (dsRNA) synthesis. Interacts with JMJ24.

Its subcellular location is the nucleus. It localises to the nucleoplasm. The protein resides in the nucleolus. The catalysed reaction is RNA(n) + a ribonucleoside 5'-triphosphate = RNA(n+1) + diphosphate. Its function is as follows. RNA-dependent direct polymerase involved in the production of small interfering RNAs (siRNAs). Binds to single-stranded RNA (ssRNA); engages ssRNAs longer than 7 nucleotides and initiates internal to their 3' ends. Able to transcribe the RNA of an RNA/DNA hybrid, the transcript produced by Pol IV, if its 3' end is accessible, to generate double-stranded small interfering RNAs (dsRNAs) precursor essential for establishing and maintaining DNA methylation. Required for the biogenesis of endogenous siRNAs of 24 nucleotide which derive from heterochromatin and DNA repeats such as transposons or endogenous gene tandem repeats, such as repeats present in FWA gene. Involved in transcriptional gene silencing (TGS). Component of the RNA-directed DNA methylation (RdDM) silencing pathway that utilizes siRNAs to guide DNA methyltransferases to asymmetric cytosines. Involved in control of flowering time through RdDM of FWA locus. Required for reception of long-distance mRNA silencing in the shoot. Required for the formation of telomeric siRNAs and the RNA-dependent DNA methylation of asymmetric cytosines in telomeric (5'-CCCTAAA-3') repeats. This Arabidopsis thaliana (Mouse-ear cress) protein is RNA-dependent RNA polymerase 2.